The following is a 300-amino-acid chain: MAIAPRGRFAPTPSGDLHLGSLVAAVGSYLHVRSQCGTWLLRIDDLDAPRVVPGASDRIQTCLEAFGLHWDEVVYFQQPQQEHYQAALEQLTATGRVYRCQCSRKQLSQSGDSVSVDGSLRYPGFCRDRQLSSEIEGSDRLNVQNLPAIALEDAWQGRYQQDLAQAVGDFILRRRDRLFSYHLATVVDDARQGITEVIRGLDLLASTPRQIALQQLLNLPTPHYGHLPLVVWPNGDKLSKQTKAPPLDLRQAPALLSQAIGHLGLAMPSDLQGAPVGEQLAWAIAHFPAPRLSKQPDSLS.

L-glutamate is bound by residues 8–12 and Asp44; that span reads RFAPT. The 'HIGH' region signature appears at 11–21; the sequence is PTPSGDLHLGS. The Zn(2+) site is built by Cys100, Cys102, Tyr122, and Cys126. The L-glutamate site is built by Tyr181 and Arg199. The short motif at 237–241 is the 'KMSKS' region element; sequence KLSKQ. Lys240 is a binding site for ATP.

This sequence belongs to the class-I aminoacyl-tRNA synthetase family. GluQ subfamily. Zn(2+) is required as a cofactor.

Its function is as follows. Catalyzes the tRNA-independent activation of glutamate in presence of ATP and the subsequent transfer of glutamate onto a tRNA(Asp). Glutamate is transferred on the 2-amino-5-(4,5-dihydroxy-2-cyclopenten-1-yl) moiety of the queuosine in the wobble position of the QUC anticodon. This chain is Glutamyl-Q tRNA(Asp) synthetase, found in Synechococcus sp. (strain ATCC 27144 / PCC 6301 / SAUG 1402/1) (Anacystis nidulans).